Consider the following 464-residue polypeptide: MILANVFCLFFFLDETLRSLASPSSLQGPELHGWRPPVDCVRANELCAAESNCSSRYRTLRQCLAGRDRNTMLANKECQAALEVLQESPLYDCRCKRGMKKELQCLQIYWSIHLGLTEGEEFYEASPYEPVTSRLSDIFRLASIFSGTGADPVVSAKSNHCLDAAKACNLNDNCKKLRSSYISICNREISPTERCNRRKCHKALRQFFDRVPSEYTYRMLFCSCQDQACAERRRQTILPSCSYEDKEKPNCLDLRGVCRTDHLCRSRLADFHANCRASYQTVTSCPADNYQACLGSYAGMIGFDMTPNYVDSSPTGIVVSPWCSCRGSGNMEEECEKFLRDFTENPCLRNAIQAFGNGTDVNVSPKGPSFQATQAPRVEKTPSLPDDLSDSTSLGTSVITTCTSVQEQGLKANNSKELSMCFTELTTNIIPGSNKVIKPNSGPSRARPSAALTVLSVLMLKLAL.

Residues 1–21 (MILANVFCLFFFLDETLRSLA) form the signal peptide. 11 disulfide bridges follow: C40–C93, C95–C105, C161–C222, C168–C174, C185–C200, C195–C241, C224–C229, C251–C323, C258–C264, C275–C293, and C285–C347. N52 is a glycosylation site (N-linked (GlcNAc...) asparagine). N357 carries an N-linked (GlcNAc...) asparagine glycan. Positions 363–392 (VSPKGPSFQATQAPRVEKTPSLPDDLSDST) are disordered. Positions 381–392 (TPSLPDDLSDST) are enriched in low complexity. N-linked (GlcNAc...) asparagine glycosylation occurs at N413. Residue S444 is the site of GPI-anchor amidated serine attachment. A propeptide spans 445-464 (RARPSAALTVLSVLMLKLAL) (removed in mature form).

The protein belongs to the GDNFR family. Interacts with NRTN ligand and RET: forms a 2:2:2 ternary complex composed of NRTN ligand, GFRA2 and RET receptor. Also forms a 4:4:4 tetrameric complex composed of 4 copies of NRTN ligand, GFRA2 and RET receptor, which prevents endocytosis of RET. Interacts with SORL1. In terms of tissue distribution, found in both brain and placenta.

It is found in the cell membrane. Its function is as follows. Receptor for neurturin (NRTN), a growth factor that supports the survival of sympathetic neurons. NRTN-binding leads to autophosphorylation and activation of the RET receptor. Also able to mediate GDNF signaling through the RET tyrosine kinase receptor. Participates in NRTN-induced 'Ser-727' phosphorylation of STAT3. In Homo sapiens (Human), this protein is GDNF family receptor alpha-2 (GFRA2).